Consider the following 266-residue polypeptide: Agamous-like MADS-box protein AGL97 (266 aa).

The 61-residue stretch at 3–63 (GVKRKIAIEK…SNSNAAFYSF (61 aa)) folds into the MADS-box domain. Residues 88–130 (WEDESLLKSENLEELREAMDSMSTMLRDLKELEKQRDHQTQTL) are a coiled coil.

As to quaternary structure, interacts with AGL27 and AGL62.

It is found in the nucleus. Putative transcription factor. This is Agamous-like MADS-box protein AGL97 (AGL97) from Arabidopsis thaliana (Mouse-ear cress).